A 319-amino-acid polypeptide reads, in one-letter code: Aspartate carbamoyltransferase catalytic subunit (319 aa).

Residues arginine 57 and threonine 58 each coordinate carbamoyl phosphate. Lysine 85 is an L-aspartate binding site. Positions 107, 135, and 138 each coordinate carbamoyl phosphate. L-aspartate contacts are provided by arginine 168 and arginine 222. Residues glycine 263 and proline 264 each contribute to the carbamoyl phosphate site.

This sequence belongs to the aspartate/ornithine carbamoyltransferase superfamily. ATCase family. In terms of assembly, heterododecamer (2C3:3R2) of six catalytic PyrB chains organized as two trimers (C3), and six regulatory PyrI chains organized as three dimers (R2).

The enzyme catalyses carbamoyl phosphate + L-aspartate = N-carbamoyl-L-aspartate + phosphate + H(+). Its pathway is pyrimidine metabolism; UMP biosynthesis via de novo pathway; (S)-dihydroorotate from bicarbonate: step 2/3. Functionally, catalyzes the condensation of carbamoyl phosphate and aspartate to form carbamoyl aspartate and inorganic phosphate, the committed step in the de novo pyrimidine nucleotide biosynthesis pathway. The protein is Aspartate carbamoyltransferase catalytic subunit of Paracoccus denitrificans (strain Pd 1222).